The chain runs to 347 residues: Anthranilate phosphoribosyltransferase (347 aa).

Residues Gly88, 91 to 92, Thr96, 98 to 101, 116 to 124, and Ser128 contribute to the 5-phospho-alpha-D-ribose 1-diphosphate site; these read GD, NIST, and KHGNRSVSS. Residue Gly88 participates in anthranilate binding. Residue Ser100 coordinates Mg(2+). Asn119 is a binding site for anthranilate. Arg174 serves as a coordination point for anthranilate. Residues Asp232 and Glu233 each contribute to the Mg(2+) site.

The protein belongs to the anthranilate phosphoribosyltransferase family. As to quaternary structure, homodimer. It depends on Mg(2+) as a cofactor.

The enzyme catalyses N-(5-phospho-beta-D-ribosyl)anthranilate + diphosphate = 5-phospho-alpha-D-ribose 1-diphosphate + anthranilate. It functions in the pathway amino-acid biosynthesis; L-tryptophan biosynthesis; L-tryptophan from chorismate: step 2/5. Catalyzes the transfer of the phosphoribosyl group of 5-phosphorylribose-1-pyrophosphate (PRPP) to anthranilate to yield N-(5'-phosphoribosyl)-anthranilate (PRA). The chain is Anthranilate phosphoribosyltransferase from Shewanella sp. (strain MR-4).